Reading from the N-terminus, the 157-residue chain is Succinate dehydrogenase [ubiquinone] cytochrome b small subunit, mitochondrial (157 aa).

Residues 1-45 constitute a mitochondrion transit peptide; that stretch reads MAALVLLRAGLARPRGVPTALLRGTLLRHSAVLTAAADRSAPARQ. Residues 46 to 61 lie on the Mitochondrial matrix side of the membrane; it reads SHGGAPQGHGSSKAAS. A helical membrane pass occupies residues 62 to 83; sequence LHWTSERAVSALLLGLLPAAYL. The Mitochondrial intermembrane portion of the chain corresponds to 84–88; sequence YPGPA. Residues 89–109 form a helical membrane-spanning segment; it reads VDYSLAAALTLHGHWGLGQVI. Histidine 100 contributes to the heme b binding site. Topologically, residues 110–118 are mitochondrial matrix; sequence TDYVHGDTP. Tyrosine 112 contributes to the a ubiquinone binding site. The helical transmembrane segment at 119–140 threads the bilayer; the sequence is IKVANTGLYVLSAITFTGLCYF. Residues 141-157 are Mitochondrial intermembrane-facing; the sequence is NYYDVGICKAVAMLWSI.

It belongs to the CybS family. As to quaternary structure, component of complex II composed of four subunits: the flavoprotein (FP) SDHA, iron-sulfur protein (IP) SDHB, and a cytochrome b560 composed of SDHC and SDHD.

The protein resides in the mitochondrion inner membrane. The protein operates within carbohydrate metabolism; tricarboxylic acid cycle. In terms of biological role, membrane-anchoring subunit of succinate dehydrogenase (SDH) that is involved in complex II of the mitochondrial electron transport chain and is responsible for transferring electrons from succinate to ubiquinone (coenzyme Q). SDH also oxidizes malate to the non-canonical enol form of oxaloacetate, enol-oxaloacetate. Enol-oxaloacetate, which is a potent inhibitor of the succinate dehydrogenase activity, is further isomerized into keto-oxaloacetate. This chain is Succinate dehydrogenase [ubiquinone] cytochrome b small subunit, mitochondrial (SDHD), found in Gallus gallus (Chicken).